A 437-amino-acid chain; its full sequence is Probable indole-3-pyruvate monooxygenase YUCCA3 (437 aa).

41 to 46 is an FAD binding site; that stretch reads GAGPSG. An NADP(+)-binding site is contributed by 212–217; that stretch reads GCGNSG.

It belongs to the FMO family. The cofactor is FAD.

It carries out the reaction indole-3-pyruvate + NADPH + O2 + H(+) = (indol-3-yl)acetate + CO2 + NADP(+) + H2O. Its pathway is plant hormone metabolism; auxin biosynthesis. Functionally, involved in auxin biosynthesis. Belongs to the set of redundant YUCCA genes probably responsible for auxin biosynthesis in roots. In Arabidopsis thaliana (Mouse-ear cress), this protein is Probable indole-3-pyruvate monooxygenase YUCCA3 (YUC3).